Consider the following 219-residue polypeptide: Virginiamycin A acetyltransferase (219 aa).

The active site involves histidine 87.

This sequence belongs to the transferase hexapeptide repeat family.

Its function is as follows. Inactivates the A compounds of virginiamycin-like antibiotics, thus providing resistance to these antibiotics. In Staphylococcus aureus, this protein is Virginiamycin A acetyltransferase (vat).